Reading from the N-terminus, the 292-residue chain is Alpha-soluble NSF attachment protein (292 aa).

Position 2 is an N-acetylserine (Ser2). Lys261 is covalently cross-linked (Glycyl lysine isopeptide (Lys-Gly) (interchain with G-Cter in ubiquitin)).

This sequence belongs to the SNAP family. Binds to vacuolar cis-SNARE complexes composed of the v-SNAREs NYV1, VTI1 and YKT6, and the t-SNAREs VAM3 and VAM7. Interacts with SEC18.

Its subcellular location is the membrane. Its function is as follows. SNARE complex protein that binds to cis-SNARE complexes on membranes and is required for vesicular transport between the endoplasmic reticulum and the Golgi apparatus and for homotypic vacuole fusion. During the priming step of membrane fusion, is released from cis-SNARE complexes by SEC18 to establish a pool of unpaired SNAREs, which are required for interactions in trans during docking and fusion steps. Can displace HOPS from SNARE complexes, which may be a prerequisite for trans-SNARE complex disassembly and subsequent rounds of priming, docking and fusion. The chain is Alpha-soluble NSF attachment protein (SEC17) from Saccharomyces cerevisiae (strain ATCC 204508 / S288c) (Baker's yeast).